Reading from the N-terminus, the 219-residue chain is METIVLVPRQDQETFSDSRPVLDGDLMLEFLENKIRHPVRRRQPRVVPVTSSDPEVVDDEDDEDQSDDSDEERQRLYFQYMVLKRMYPTEVIPEMTTYSNVAIMREKYKLLTRRLSLDKHINEWKKYIIVGMCIMELVMTKLNFDASGFARYQIKSLGAYDQLLAEMADKYYEATPQSSVEMRLMTTMGMNMAVFMLGKLLGGQMDFLGLLENAFGSSS.

Residues 42–71 (RQPRVVPVTSSDPEVVDDEDDEDQSDDSDE) form a disordered region. The span at 45 to 54 (RVVPVTSSDP) shows a compositional bias: low complexity. Over residues 55-71 (EVVDDEDDEDQSDDSDE) the composition is skewed to acidic residues.

This is an uncharacterized protein from Dryophytes versicolor (chameleon treefrog).